A 327-amino-acid polypeptide reads, in one-letter code: ATP-dependent (S)-NAD(P)H-hydrate dehydratase (327 aa).

Positions 11 to 313 constitute a YjeF C-terminal domain; it reads LLTRVKRIIP…RHVGKAYNAL (303 aa). (6S)-NADPHX contacts are provided by residues glycine 121 and 174–180; that span reads NVIEFKR. ATP is bound by residues 209–213 and 228–237; these read KGQSD and GGLKRCGGQG. Aspartate 238 provides a ligand contact to (6S)-NADPHX.

This sequence belongs to the NnrD/CARKD family. Mg(2+) is required as a cofactor.

It is found in the cytoplasm. The enzyme catalyses (6S)-NADHX + ATP = ADP + phosphate + NADH + H(+). It carries out the reaction (6S)-NADPHX + ATP = ADP + phosphate + NADPH + H(+). Catalyzes the dehydration of the S-form of NAD(P)HX at the expense of ATP, which is converted to ADP. Together with NAD(P)HX epimerase, which catalyzes the epimerization of the S- and R-forms, the enzyme allows the repair of both epimers of NAD(P)HX, a damaged form of NAD(P)H that is a result of enzymatic or heat-dependent hydration. This Schizosaccharomyces pombe (strain 972 / ATCC 24843) (Fission yeast) protein is ATP-dependent (S)-NAD(P)H-hydrate dehydratase.